We begin with the raw amino-acid sequence, 171 residues long: S-ribosylhomocysteine lyase (171 aa).

Positions 54, 58, and 128 each coordinate Fe cation.

It belongs to the LuxS family. Homodimer. It depends on Fe cation as a cofactor.

It carries out the reaction S-(5-deoxy-D-ribos-5-yl)-L-homocysteine = (S)-4,5-dihydroxypentane-2,3-dione + L-homocysteine. Its function is as follows. Involved in the synthesis of autoinducer 2 (AI-2) which is secreted by bacteria and is used to communicate both the cell density and the metabolic potential of the environment. The regulation of gene expression in response to changes in cell density is called quorum sensing. Catalyzes the transformation of S-ribosylhomocysteine (RHC) to homocysteine (HC) and 4,5-dihydroxy-2,3-pentadione (DPD). In Salmonella arizonae (strain ATCC BAA-731 / CDC346-86 / RSK2980), this protein is S-ribosylhomocysteine lyase.